The chain runs to 451 residues: Trigger factor (451 aa).

A PPIase FKBP-type domain is found at 165–250; that stretch reads DDKLTIDFEG…LHQIQAREAL (86 aa).

The protein belongs to the FKBP-type PPIase family. Tig subfamily.

The protein localises to the cytoplasm. It catalyses the reaction [protein]-peptidylproline (omega=180) = [protein]-peptidylproline (omega=0). Functionally, involved in protein export. Acts as a chaperone by maintaining the newly synthesized protein in an open conformation. Functions as a peptidyl-prolyl cis-trans isomerase. This is Trigger factor from Helicobacter pylori (strain G27).